A 327-amino-acid polypeptide reads, in one-letter code: ATP-dependent 6-phosphofructokinase (327 aa).

ATP is bound at residue G12. Residues 22–26 and 55–60 each bind ADP; these read RGVVR and RYSVSD. Residues 73 to 74 and 103 to 106 contribute to the ATP site; these read RF and GDGS. Position 104 (D104) interacts with Mg(2+). Substrate is bound at residue 127 to 129; sequence TID. The Proton acceptor role is filled by D129. ADP is bound at residue R156. Substrate is bound by residues R164 and 171 to 173; that span reads MGR. Residues 187-189, K213, and 215-217 each bind ADP; these read GCE and KKH. Residues E224, R245, and 251-254 contribute to the substrate site; that span reads HIQR.

It belongs to the phosphofructokinase type A (PFKA) family. ATP-dependent PFK group I subfamily. Prokaryotic clade 'B1' sub-subfamily. In terms of assembly, homotetramer. Requires Mg(2+) as cofactor.

It localises to the cytoplasm. It carries out the reaction beta-D-fructose 6-phosphate + ATP = beta-D-fructose 1,6-bisphosphate + ADP + H(+). It functions in the pathway carbohydrate degradation; glycolysis; D-glyceraldehyde 3-phosphate and glycerone phosphate from D-glucose: step 3/4. With respect to regulation, allosterically activated by ADP and other diphosphonucleosides, and allosterically inhibited by phosphoenolpyruvate. Catalyzes the phosphorylation of D-fructose 6-phosphate to fructose 1,6-bisphosphate by ATP, the first committing step of glycolysis. This is ATP-dependent 6-phosphofructokinase from Hamiltonella defensa subsp. Acyrthosiphon pisum (strain 5AT).